The following is a 536-amino-acid chain: Ribulokinase (536 aa).

Belongs to the ribulokinase family.

It carries out the reaction D-ribulose + ATP = D-ribulose 5-phosphate + ADP + H(+). It catalyses the reaction L-ribulose + ATP = L-ribulose 5-phosphate + ADP + H(+). Its pathway is carbohydrate degradation; L-arabinose degradation via L-ribulose; D-xylulose 5-phosphate from L-arabinose (bacterial route): step 2/3. The sequence is that of Ribulokinase from Staphylococcus epidermidis (strain ATCC 12228 / FDA PCI 1200).